The sequence spans 85 residues: Probable dolichol-phosphate mannosyltransferase subunit 3 (85 aa).

The next 2 helical transmembrane spans lie at 13-33 (VLLV…LSYI) and 37-57 (AHCL…VATF).

Belongs to the DPM3 family.

It is found in the endoplasmic reticulum membrane. The protein operates within protein modification; protein glycosylation. Its function is as follows. Stabilizer subunit of the dolichol-phosphate-mannose synthase complex. In Caenorhabditis briggsae, this protein is Probable dolichol-phosphate mannosyltransferase subunit 3.